Here is a 92-residue protein sequence, read N- to C-terminus: UPF0250 protein COSY_0496 (92 aa).

Belongs to the UPF0250 family.

The protein is UPF0250 protein COSY_0496 of Vesicomyosocius okutanii subsp. Calyptogena okutanii (strain HA).